We begin with the raw amino-acid sequence, 188 residues long: NADH-quinone oxidoreductase subunit I (188 aa).

4Fe-4S ferredoxin-type domains follow at residues 44–74 and 90–119; these read LNRYADGLEKCIGCELCAWACPADAIYVEGA and QVYQINYLRCIGCGLCIEACPTRALTMTNE. Residues Cys54, Cys57, Cys60, Cys64, Cys99, Cys102, Cys105, and Cys109 each coordinate [4Fe-4S] cluster. Positions 167-188 are disordered; sequence TGGAAAAAQDESEVDDTAGDRP. Positions 176-188 are enriched in acidic residues; it reads DESEVDDTAGDRP.

This sequence belongs to the complex I 23 kDa subunit family. NDH-1 is composed of 14 different subunits. Subunits NuoA, H, J, K, L, M, N constitute the membrane sector of the complex. [4Fe-4S] cluster serves as cofactor.

Its subcellular location is the cell membrane. The catalysed reaction is a quinone + NADH + 5 H(+)(in) = a quinol + NAD(+) + 4 H(+)(out). Its function is as follows. NDH-1 shuttles electrons from NADH, via FMN and iron-sulfur (Fe-S) centers, to quinones in the respiratory chain. The immediate electron acceptor for the enzyme in this species is believed to be ubiquinone. Couples the redox reaction to proton translocation (for every two electrons transferred, four hydrogen ions are translocated across the cytoplasmic membrane), and thus conserves the redox energy in a proton gradient. In Rhodococcus jostii (strain RHA1), this protein is NADH-quinone oxidoreductase subunit I.